The chain runs to 450 residues: tRNA modification GTPase MnmE (450 aa).

(6S)-5-formyl-5,6,7,8-tetrahydrofolate-binding residues include Arg-23, Glu-79, and Lys-118. Residues 214–374 enclose the TrmE-type G domain; the sequence is GITLILVGKP…LKDHILAKVG (161 aa). K(+) is bound at residue Asn-224. GTP-binding positions include 224–229, 243–249, and 268–271; these read NAGKSS, TSIAGTT, and DTAG. Position 228 (Ser-228) interacts with Mg(2+). 3 residues coordinate K(+): Thr-243, Ile-245, and Thr-248. Mg(2+) is bound at residue Thr-249. Lys-450 lines the (6S)-5-formyl-5,6,7,8-tetrahydrofolate pocket.

Belongs to the TRAFAC class TrmE-Era-EngA-EngB-Septin-like GTPase superfamily. TrmE GTPase family. In terms of assembly, homodimer. Heterotetramer of two MnmE and two MnmG subunits. K(+) serves as cofactor.

It localises to the cytoplasm. Functionally, exhibits a very high intrinsic GTPase hydrolysis rate. Involved in the addition of a carboxymethylaminomethyl (cmnm) group at the wobble position (U34) of certain tRNAs, forming tRNA-cmnm(5)s(2)U34. The protein is tRNA modification GTPase MnmE of Francisella philomiragia subsp. philomiragia (strain ATCC 25017 / CCUG 19701 / FSC 153 / O#319-036).